We begin with the raw amino-acid sequence, 360 residues long: Squamosa promoter-binding-like protein 7 (360 aa).

A compositionally biased stretch (gly residues) spans 74–89 (AQGSGGGGGGGGGGSA). Positions 74–98 (AQGSGGGGGGGGGGSADQGKRKEKA) are disordered. The SBP-type zinc finger occupies 105 to 182 (VPRCQVEGCD…AGHNERRRRS (78 aa)). Residues Cys-108, Cys-113, Cys-130, His-133, Cys-149, Cys-152, His-156, and Cys-168 each contribute to the Zn(2+) site. Positions 165–181 (KKSCRRRLAGHNERRRR) match the Bipartite nuclear localization signal motif. Residues 172–182 (LAGHNERRRRS) show a composition bias toward basic residues. Disordered regions lie at residues 172 to 196 (LAGH…AHPH), 261 to 306 (FFSD…HENQ), and 318 to 360 (TTAA…ARVV).

As to expression, expressed in young panicles.

Its subcellular location is the nucleus. In terms of biological role, trans-acting factor that binds specifically to the consensus nucleotide sequence 5'-TNCGTACAA-3'. May be involved in panicle development. This is Squamosa promoter-binding-like protein 7 (SPL7) from Oryza sativa subsp. japonica (Rice).